A 191-amino-acid polypeptide reads, in one-letter code: Protein HP-20 homolog (191 aa).

Positions 1-16 are cleaved as a signal peptide; the sequence is MADLRILVSIILMTNA. Positions 22–58 constitute a Collagen-like domain; the sequence is GCTGPPGPPGHPGPPGIRGPPGIRGIPGLPGPPGTPG. A disordered region spans residues 22-61; sequence GCTGPPGPPGHPGPPGIRGPPGIRGIPGLPGPPGTPGPSV. The segment covering 26-39 has biased composition (pro residues); the sequence is PPGPPGHPGPPGIR. Positions 64-191 constitute a C1q domain; the sequence is PCHRQSAFTV…VTIYFSGFLT (128 aa).

It localises to the secreted. This chain is Protein HP-20 homolog, found in Bos taurus (Bovine).